Reading from the N-terminus, the 215-residue chain is 2-phospho-L-lactate guanylyltransferase (215 aa).

It belongs to the CofC family. In terms of assembly, homodimer.

It catalyses the reaction (2S)-2-phospholactate + GTP + H(+) = (2S)-lactyl-2-diphospho-5'-guanosine + diphosphate. It functions in the pathway cofactor biosynthesis; coenzyme F420 biosynthesis. Guanylyltransferase that catalyzes the activation of (2S)-2-phospholactate (2-PL) as (2S)-lactyl-2-diphospho-5'-guanosine, via the condensation of 2-PL with GTP. It is involved in the biosynthesis of coenzyme F420, a hydride carrier cofactor. This is 2-phospho-L-lactate guanylyltransferase from Methanococcoides burtonii (strain DSM 6242 / NBRC 107633 / OCM 468 / ACE-M).